A 798-amino-acid chain; its full sequence is Nuclear intron maturase 4, mitochondrial (798 aa).

A mitochondrion-targeting transit peptide spans 1-16 (MFRKRNLVLDLLRRCY). The interval 578-665 (VVAPTNAIGR…AAKYRIHENE (88 aa)) is intron maturase type-2. The segment at 729 to 778 (CFVIGCSMAAPAVYTLHAMERQKFPGWKTGFSVCIPSSLNGRRIGLCKQH) adopts a THAP-type zinc-finger fold.

This sequence belongs to the plant nuclear intron maturase (nMat) family.

It localises to the mitochondrion. The protein localises to the plastid. Its subcellular location is the chloroplast. Its function is as follows. Nuclear-encoded maturase required for splicing of group-II introns in mitochondria. Involved in NAD1 pre-mRNA processing and maturation of introns 1, 3 and 4. Necessary for mitochondrial biogenesis during early developmental stages. Essential for respiratory holocomplex I biogenesis in mitochondria. This is Nuclear intron maturase 4, mitochondrial from Arabidopsis thaliana (Mouse-ear cress).